The sequence spans 142 residues: 3-hydroxyacyl-[acyl-carrier-protein] dehydratase FabZ (142 aa).

H47 is a catalytic residue.

This sequence belongs to the thioester dehydratase family. FabZ subfamily.

The protein localises to the cytoplasm. The catalysed reaction is a (3R)-hydroxyacyl-[ACP] = a (2E)-enoyl-[ACP] + H2O. In terms of biological role, involved in unsaturated fatty acids biosynthesis. Catalyzes the dehydration of short chain beta-hydroxyacyl-ACPs and long chain saturated and unsaturated beta-hydroxyacyl-ACPs. This is 3-hydroxyacyl-[acyl-carrier-protein] dehydratase FabZ from Coxiella burnetii (strain RSA 331 / Henzerling II).